We begin with the raw amino-acid sequence, 698 residues long: Testis-specific gene 10 protein (698 aa).

Ser163 is modified (phosphoserine). Positions 556–689 (QMANERISMQ…SPDRGLDRSL (134 aa)) are interaction with HIF1A. The span at 659 to 670 (HMSSTMKPNTKC) shows a compositional bias: polar residues. Residues 659–685 (HMSSTMKPNTKCHSPERAHHRSPDRGL) form a disordered region. Basic and acidic residues predominate over residues 671-685 (HSPERAHHRSPDRGL). Ser688 is modified (phosphoserine).

It belongs to the CEP135/TSGA10 family. Interacts with HIF1A. Post-translationally, processed into N-terminal 27-kDa and C-terminal 55-kDa fragments. As to expression, expressed in the testis, in spermatozoa (at protein level). Expressed in actively dividing fetal tissues, including sternum, intestine, limb, kidney and stomach.

Its subcellular location is the cytoplasm. The protein resides in the cytoskeleton. The protein localises to the microtubule organizing center. It is found in the centrosome. It localises to the centriole. In terms of biological role, plays a role in spermatogenesis. When overexpressed, prevents nuclear localization of HIF1A. The polypeptide is Testis-specific gene 10 protein (TSGA10) (Homo sapiens (Human)).